The following is a 337-amino-acid chain: Phosphoribosylformylglycinamidine cyclo-ligase (337 aa).

It belongs to the AIR synthase family.

It is found in the cytoplasm. It carries out the reaction 2-formamido-N(1)-(5-O-phospho-beta-D-ribosyl)acetamidine + ATP = 5-amino-1-(5-phospho-beta-D-ribosyl)imidazole + ADP + phosphate + H(+). It functions in the pathway purine metabolism; IMP biosynthesis via de novo pathway; 5-amino-1-(5-phospho-D-ribosyl)imidazole from N(2)-formyl-N(1)-(5-phospho-D-ribosyl)glycinamide: step 2/2. This Pseudothermotoga lettingae (strain ATCC BAA-301 / DSM 14385 / NBRC 107922 / TMO) (Thermotoga lettingae) protein is Phosphoribosylformylglycinamidine cyclo-ligase.